Reading from the N-terminus, the 284-residue chain is Bifunctional protein FolD (284 aa).

NADP(+)-binding positions include 165 to 167 (GAS), Ser190, and Ile231.

Belongs to the tetrahydrofolate dehydrogenase/cyclohydrolase family. Homodimer.

It carries out the reaction (6R)-5,10-methylene-5,6,7,8-tetrahydrofolate + NADP(+) = (6R)-5,10-methenyltetrahydrofolate + NADPH. The catalysed reaction is (6R)-5,10-methenyltetrahydrofolate + H2O = (6R)-10-formyltetrahydrofolate + H(+). The protein operates within one-carbon metabolism; tetrahydrofolate interconversion. Its function is as follows. Catalyzes the oxidation of 5,10-methylenetetrahydrofolate to 5,10-methenyltetrahydrofolate and then the hydrolysis of 5,10-methenyltetrahydrofolate to 10-formyltetrahydrofolate. The polypeptide is Bifunctional protein FolD (Bordetella avium (strain 197N)).